A 721-amino-acid chain; its full sequence is DNA ligase (721 aa).

Residues 42–46 (DAEYD), 91–92 (SL), and glutamate 125 each bind NAD(+). Catalysis depends on lysine 127, which acts as the N6-AMP-lysine intermediate. Residues arginine 148, glutamate 184, lysine 300, and lysine 324 each contribute to the NAD(+) site. The Zn(2+) site is built by cysteine 430, cysteine 433, cysteine 448, and cysteine 454. A BRCT domain is found at 642 to 721 (STGSPVEGKT…DAWFTLVGEE (80 aa)).

This sequence belongs to the NAD-dependent DNA ligase family. LigA subfamily. Mg(2+) is required as a cofactor. Requires Mn(2+) as cofactor.

It catalyses the reaction NAD(+) + (deoxyribonucleotide)n-3'-hydroxyl + 5'-phospho-(deoxyribonucleotide)m = (deoxyribonucleotide)n+m + AMP + beta-nicotinamide D-nucleotide.. DNA ligase that catalyzes the formation of phosphodiester linkages between 5'-phosphoryl and 3'-hydroxyl groups in double-stranded DNA using NAD as a coenzyme and as the energy source for the reaction. It is essential for DNA replication and repair of damaged DNA. The chain is DNA ligase from Brucella anthropi (strain ATCC 49188 / DSM 6882 / CCUG 24695 / JCM 21032 / LMG 3331 / NBRC 15819 / NCTC 12168 / Alc 37) (Ochrobactrum anthropi).